The primary structure comprises 209 residues: MFGLIGKKVGMTQVFQSNGIVVPVTVIEFEPNYVIGKKTMERDGYDALIMGSVDLKGSKVSRPIKGQYKKLENIEPKRYVIEFKGLKGYDAGDEVGLDAFREIKYVDITGTTKGKGFQGAMKRHNFSGGPSSHGSKFHRHLGGTGQATTPARTFKGTKMAGRMGGEQQTIQNLEIVFIDEEKRAILVKGAVPGVKGSFVIVKKAKKVGI.

The segment at 127-151 (SGGPSSHGSKFHRHLGGTGQATTPA) is disordered.

The protein belongs to the universal ribosomal protein uL3 family. In terms of assembly, part of the 50S ribosomal subunit. Forms a cluster with proteins L14 and L19.

One of the primary rRNA binding proteins, it binds directly near the 3'-end of the 23S rRNA, where it nucleates assembly of the 50S subunit. In Borrelia duttonii (strain Ly), this protein is Large ribosomal subunit protein uL3.